Reading from the N-terminus, the 158-residue chain is Small ribosomal subunit protein uS7 (158 aa).

It belongs to the universal ribosomal protein uS7 family. Part of the 30S ribosomal subunit. Contacts proteins S9 and S11.

In terms of biological role, one of the primary rRNA binding proteins, it binds directly to 16S rRNA where it nucleates assembly of the head domain of the 30S subunit. Is located at the subunit interface close to the decoding center, probably blocks exit of the E-site tRNA. In Porphyromonas gingivalis (strain ATCC BAA-308 / W83), this protein is Small ribosomal subunit protein uS7.